Reading from the N-terminus, the 224-residue chain is Charged multivesicular body protein 4b (224 aa).

The tract at residues 1-23 is disordered; sequence MSVFGKLFGAGGGKAGKGGPTPQ. Position 2 is an N-acetylserine (Ser-2). Lys-6 bears the N6-acetyllysine mark. Over residues 8–19 the composition is skewed to gly residues; the sequence is FGAGGGKAGKGG. Positions 23-183 form a coiled coil; the sequence is QEAIQRLRDT…EELDKNLLEI (161 aa). At Lys-114 the chain carries N6-acetyllysine. Ser-184 and Ser-223 each carry phosphoserine. A disordered region spans residues 185–224; it reads GPETVPLPNVPSIALPSKPAKKKEEEDDDMKELENWAGSM.

This sequence belongs to the SNF7 family. In terms of assembly, probable core component of the endosomal sorting required for transport complex III (ESCRT-III). ESCRT-III components are thought to multimerize to form a flat lattice on the perimeter membrane of the endosome. Several assembly forms of ESCRT-III may exist that interact and act sequentially. Interacts with CHMP6 and CHMP4C. Interacts with PDCD6IP; the interaction is direct. Interacts with VPS4A; the interaction is direct. Interacts with VPS4B; the interaction is direct. Interacts with CHMP7. Interacts with CFTR; the interaction requires misfolded CFTR. Interacts with PTPN23. Interacts with CC2D1B. ISGylated. Isgylation weakens its interaction with VPS4A. As to expression, widely expressed. Expressed at higher level in heart and skeletal muscle. Also expressed in brain, colon, thymus, spleen, kidney, liver, small intestine, placenta, lung and peripheral blood lymphocytes.

The protein resides in the cytoplasm. It is found in the cytosol. It localises to the late endosome membrane. Its subcellular location is the midbody. The protein localises to the nucleus envelope. Its function is as follows. Probable core component of the endosomal sorting required for transport complex III (ESCRT-III) which is involved in multivesicular bodies (MVBs) formation and sorting of endosomal cargo proteins into MVBs. MVBs contain intraluminal vesicles (ILVs) that are generated by invagination and scission from the limiting membrane of the endosome and mostly are delivered to lysosomes enabling degradation of membrane proteins, such as stimulated growth factor receptors, lysosomal enzymes and lipids. The MVB pathway appears to require the sequential function of ESCRT-O, -I,-II and -III complexes. ESCRT-III proteins mostly dissociate from the invaginating membrane before the ILV is released. The ESCRT machinery also functions in topologically equivalent membrane fission events, such as the terminal stages of cytokinesis. Together with SPAST, the ESCRT-III complex promotes nuclear envelope sealing and mitotic spindle disassembly during late anaphase. Plays a role in the endosomal sorting pathway. ESCRT-III proteins are believed to mediate the necessary vesicle extrusion and/or membrane fission activities, possibly in conjunction with the AAA ATPase VPS4. When overexpressed, membrane-assembled circular arrays of CHMP4B filaments can promote or stabilize negative curvature and outward budding. CHMP4A/B/C are required for the exosomal release of SDCBP, CD63 and syndecan. Majority of the protein exists in a folded closed conformation. (Microbial infection) The ESCRT machinery also functions in topologically equivalent membrane fission events, such as the budding of enveloped viruses (HIV-1 and other lentiviruses). Via its interaction with PDCD6IP involved in HIV-1 p6- and p9-dependent virus release. The chain is Charged multivesicular body protein 4b (CHMP4B) from Homo sapiens (Human).